The chain runs to 301 residues: Ornithine carbamoyltransferase (301 aa).

Carbamoyl phosphate-binding positions include 46–49 (STRT), Gln73, Arg97, and 124–127 (HPCQ). L-ornithine contacts are provided by residues Asn154, Asp218, and 222–223 (SM). Carbamoyl phosphate-binding positions include 258 to 259 (CL) and Arg286.

Belongs to the aspartate/ornithine carbamoyltransferase superfamily. OTCase family.

The protein localises to the cytoplasm. The enzyme catalyses carbamoyl phosphate + L-ornithine = L-citrulline + phosphate + H(+). It functions in the pathway amino-acid biosynthesis; L-arginine biosynthesis; L-arginine from L-ornithine and carbamoyl phosphate: step 1/3. Its function is as follows. Reversibly catalyzes the transfer of the carbamoyl group from carbamoyl phosphate (CP) to the N(epsilon) atom of ornithine (ORN) to produce L-citrulline. The sequence is that of Ornithine carbamoyltransferase (argF) from Methanothermobacter thermautotrophicus (strain ATCC 29096 / DSM 1053 / JCM 10044 / NBRC 100330 / Delta H) (Methanobacterium thermoautotrophicum).